The sequence spans 565 residues: Periplasmic trehalase (565 aa).

The first 30 residues, 1–30 (MKSPAPSRPQKMALIPACIFLCFAALSVQA), serve as a signal peptide directing secretion. Residues R152, 159–160 (WD), N196, 205–207 (RSQ), 277–279 (RPE), and G310 contribute to the substrate site. Active-site proton donor/acceptor residues include D312 and E496. E511 contacts substrate. Residues 538–565 (PCDNVPATRPTVKSATTQPSTKEAQPTP) form a disordered region. Polar residues predominate over residues 548–565 (TVKSATTQPSTKEAQPTP).

It belongs to the glycosyl hydrolase 37 family. Monomer.

The protein resides in the periplasm. It catalyses the reaction alpha,alpha-trehalose + H2O = alpha-D-glucose + beta-D-glucose. Provides the cells with the ability to utilize trehalose at high osmolarity by splitting it into glucose molecules that can subsequently be taken up by the phosphotransferase-mediated uptake system. In Escherichia coli O8 (strain IAI1), this protein is Periplasmic trehalase.